We begin with the raw amino-acid sequence, 426 residues long: Flotillin-1 (426 aa).

This sequence belongs to the band 7/mec-2 family. Flotillin subfamily. As to quaternary structure, heterooligomeric complex of flotillins 1 and 2 and caveolins 1 and 2. In terms of tissue distribution, expressed in brain and ventral nerve cord from stage 12-16 of embryogenesis.

It is found in the cell membrane. It localises to the membrane. The protein resides in the caveola. In terms of biological role, may act as a scaffolding protein within caveolar membranes, functionally participating in formation of caveolae or caveolae-like vesicles. The chain is Flotillin-1 from Drosophila melanogaster (Fruit fly).